The primary structure comprises 87 residues: uncharacterized protein (87 aa).

A signal peptide spans 1–25 (MKIRKILLSSALSFGMLISAVPALA).

This is an uncharacterized protein from Bacillus subtilis (strain 168).